Here is a 442-residue protein sequence, read N- to C-terminus: ATP-dependent protease ATPase subunit HslU (442 aa).

ATP is bound by residues isoleucine 18, 60 to 65, aspartate 255, glutamate 320, and arginine 392; that span reads GVGKTE.

The protein belongs to the ClpX chaperone family. HslU subfamily. A double ring-shaped homohexamer of HslV is capped on each side by a ring-shaped HslU homohexamer. The assembly of the HslU/HslV complex is dependent on binding of ATP.

It is found in the cytoplasm. ATPase subunit of a proteasome-like degradation complex; this subunit has chaperone activity. The binding of ATP and its subsequent hydrolysis by HslU are essential for unfolding of protein substrates subsequently hydrolyzed by HslV. HslU recognizes the N-terminal part of its protein substrates and unfolds these before they are guided to HslV for hydrolysis. This Hahella chejuensis (strain KCTC 2396) protein is ATP-dependent protease ATPase subunit HslU.